A 367-amino-acid chain; its full sequence is Heme A synthase (367 aa).

Helical transmembrane passes span Ala-25 to Gly-45, Leu-111 to Gly-131, Trp-139 to Val-159, Leu-174 to Gly-194, and Gly-210 to Ala-230. His-274 is a binding site for heme. Helical transmembrane passes span Ile-276–Ala-296, Ala-305–Met-325, and Val-327–Val-347. Residue His-335 coordinates heme.

It belongs to the COX15/CtaA family. Type 2 subfamily. As to quaternary structure, interacts with CtaB. Requires heme b as cofactor.

The protein localises to the cell membrane. It catalyses the reaction Fe(II)-heme o + 2 A + H2O = Fe(II)-heme a + 2 AH2. The protein operates within porphyrin-containing compound metabolism; heme A biosynthesis; heme A from heme O: step 1/1. Functionally, catalyzes the conversion of heme O to heme A by two successive hydroxylations of the methyl group at C8. The first hydroxylation forms heme I, the second hydroxylation results in an unstable dihydroxymethyl group, which spontaneously dehydrates, resulting in the formyl group of heme A. This is Heme A synthase from Rhizobium etli (strain CIAT 652).